The following is a 164-amino-acid chain: Protein eva-1 homolog B (164 aa).

A helical transmembrane segment spans residues 29–49; sequence GLYFVLGVCFGLLLTLCLLVI. The disordered stretch occupies residues 56–110; sequence RSRPRTPAPRRDPRSSTLEPEDEDDEEDEDTMTRLGPDDTLQGQELSTEPDGPLS. The span at 74–85 shows a compositional bias: acidic residues; sequence EPEDEDDEEDED. Phosphothreonine occurs at positions 86, 149, and 157.

The protein belongs to the EVA1 family.

The protein resides in the membrane. The chain is Protein eva-1 homolog B (Eva1b) from Mus musculus (Mouse).